We begin with the raw amino-acid sequence, 291 residues long: Nucleotide-binding protein lmo2474 (291 aa).

13–20 (GMSGAGKT) serves as a coordination point for ATP. GTP is bound at residue 63-66 (DLRG).

The protein belongs to the RapZ-like family.

In terms of biological role, displays ATPase and GTPase activities. This Listeria monocytogenes serovar 1/2a (strain ATCC BAA-679 / EGD-e) protein is Nucleotide-binding protein lmo2474.